Consider the following 148-residue polypeptide: Large ribosomal subunit protein bL9 (148 aa).

The protein belongs to the bacterial ribosomal protein bL9 family.

Functionally, binds to the 23S rRNA. In Ectopseudomonas mendocina (strain ymp) (Pseudomonas mendocina), this protein is Large ribosomal subunit protein bL9.